We begin with the raw amino-acid sequence, 284 residues long: Bifunctional protein FolD (284 aa).

Residues 166 to 168 (GAS) and I232 contribute to the NADP(+) site.

It belongs to the tetrahydrofolate dehydrogenase/cyclohydrolase family. Homodimer.

It catalyses the reaction (6R)-5,10-methylene-5,6,7,8-tetrahydrofolate + NADP(+) = (6R)-5,10-methenyltetrahydrofolate + NADPH. The catalysed reaction is (6R)-5,10-methenyltetrahydrofolate + H2O = (6R)-10-formyltetrahydrofolate + H(+). It participates in one-carbon metabolism; tetrahydrofolate interconversion. Functionally, catalyzes the oxidation of 5,10-methylenetetrahydrofolate to 5,10-methenyltetrahydrofolate and then the hydrolysis of 5,10-methenyltetrahydrofolate to 10-formyltetrahydrofolate. This Pseudomonas paraeruginosa (strain DSM 24068 / PA7) (Pseudomonas aeruginosa (strain PA7)) protein is Bifunctional protein FolD.